The sequence spans 314 residues: Epithelial cell adhesion molecule (314 aa).

A signal peptide spans 1–23 (MAPPQVLAFGLLLAAATAAVAAA). Residues 24-265 (QQGCVCENYK…PPEFSMQGLQ (242 aa)) lie on the Extracellular side of the membrane. Intrachain disulfides connect Cys27–Cys46, Cys29–Cys59, Cys38–Cys48, Cys66–Cys99, Cys110–Cys116, and Cys118–Cys135. Asn37 is a glycosylation site (N-linked (GlcNAc...) asparagine). Positions 63-135 (ASKCLVMKAE…RTDKDSEISC (73 aa)) constitute a Thyroglobulin type-1 domain. Asn111 carries N-linked (GlcNAc...) asparagine glycosylation. N-linked (GlcNAc...) asparagine glycosylation occurs at Asn198. A helical membrane pass occupies residues 266–288 (AGIIAVIAVVAIAIVAGIIVLIV). Over 289-314 (STKKRRAKYEKAEIKEMGEMHRELNA) the chain is Cytoplasmic.

This sequence belongs to the EPCAM family. Monomer. Interacts with phosphorylated CLDN7. In terms of processing, glycosylation at Asn-198 is crucial for protein stability.

It localises to the lateral cell membrane. The protein resides in the cell junction. The protein localises to the tight junction. In terms of biological role, may act as a physical homophilic interaction molecule between intestinal epithelial cells (IECs) and intraepithelial lymphocytes (IELs) at the mucosal epithelium for providing immunological barrier as a first line of defense against mucosal infection. Plays a role in embryonic stem cells proliferation and differentiation. Up-regulates the expression of FABP5, MYC and cyclins A and E. This chain is Epithelial cell adhesion molecule (TACSTD1), found in Sus scrofa (Pig).